A 286-amino-acid polypeptide reads, in one-letter code: Phosphoribosylaminoimidazole-succinocarboxamide synthase (286 aa).

Belongs to the SAICAR synthetase family.

The catalysed reaction is 5-amino-1-(5-phospho-D-ribosyl)imidazole-4-carboxylate + L-aspartate + ATP = (2S)-2-[5-amino-1-(5-phospho-beta-D-ribosyl)imidazole-4-carboxamido]succinate + ADP + phosphate + 2 H(+). Its pathway is purine metabolism; IMP biosynthesis via de novo pathway; 5-amino-1-(5-phospho-D-ribosyl)imidazole-4-carboxamide from 5-amino-1-(5-phospho-D-ribosyl)imidazole-4-carboxylate: step 1/2. The chain is Phosphoribosylaminoimidazole-succinocarboxamide synthase from Histophilus somni (strain 2336) (Haemophilus somnus).